The following is an 83-amino-acid chain: MQFSKITLAIVLYALGTAALPTASRCAGAPGRDVAATRGAKLQAREEDKPTPQYRCDKCEKEFVKGNDFFNHGGRGHCKMSGY.

The signal sequence occupies residues 1-19; that stretch reads MQFSKITLAIVLYALGTAA. The segment at 54–77 adopts a C2H2-type zinc-finger fold; that stretch reads YRCDKCEKEFVKGNDFFNHGGRGH.

The protein localises to the secreted. The protein resides in the host nucleus. Probable secreted effector that translocates into the nuclei of host cells to reprogram the expression of targeted genes by binding on effector binding elements in rice. The sequence is that of Host transcription reprogramming factor 9 from Pyricularia oryzae (strain 70-15 / ATCC MYA-4617 / FGSC 8958) (Rice blast fungus).